An 874-amino-acid chain; its full sequence is Bifunctional uridylyltransferase/uridylyl-removing enzyme (874 aa).

Residues 1–332 (MPLQSPLTFS…NGGATENAEI (332 aa)) are uridylyltransferase. The uridylyl-removing stretch occupies residues 333-692 (LDADFQRRGS…ISKKATRGGT (360 aa)). The HD domain occupies 451 to 573 (VDEHSIRLLK…VRDEESLEYL (123 aa)). 2 consecutive ACT domains span residues 693-777 (EVFV…RTPN) and 800-874 (LMEF…AVTA).

It belongs to the GlnD family. It depends on Mg(2+) as a cofactor.

The enzyme catalyses [protein-PII]-L-tyrosine + UTP = [protein-PII]-uridylyl-L-tyrosine + diphosphate. It carries out the reaction [protein-PII]-uridylyl-L-tyrosine + H2O = [protein-PII]-L-tyrosine + UMP + H(+). Its activity is regulated as follows. Uridylyltransferase (UTase) activity is inhibited by glutamine, while glutamine activates uridylyl-removing (UR) activity. Modifies, by uridylylation and deuridylylation, the PII regulatory proteins (GlnB and homologs), in response to the nitrogen status of the cell that GlnD senses through the glutamine level. Under low glutamine levels, catalyzes the conversion of the PII proteins and UTP to PII-UMP and PPi, while under higher glutamine levels, GlnD hydrolyzes PII-UMP to PII and UMP (deuridylylation). Thus, controls uridylylation state and activity of the PII proteins, and plays an important role in the regulation of nitrogen assimilation and metabolism. The chain is Bifunctional uridylyltransferase/uridylyl-removing enzyme from Vibrio parahaemolyticus serotype O3:K6 (strain RIMD 2210633).